The following is a 289-amino-acid chain: MKQYLHLLEHIKTSGTFKKDRTNIGTISLFGLQARYNLKEGFPLLTTKKMAWKAICHELLWFLKGDTNIKYLVDNNVNIWNEWPYEIFKKSNDYQGESLKEFSQKIKEDSSFAQKYGELGPVYGKQWRDFFGVDQISQVINDIKNNPTSRRLIVSAWNVAQIDKMALPPCHAFFQFYVNDNNELSLHLYQRSGDMFLGVPFNIASYSLLLSMVAQVTNLKVGEFIHTIGDAHIYSNHIDQVNTQLERAPYKLPKLILNKNIKNIFDFTFEDIELENYISHETIKAKVAV.

DUMP is bound by residues R21 and 150–151 (RR). The active-site Nucleophile is C170. DUMP-binding positions include 191-194 (RSGD), N202, and 232-234 (HIY). D194 serves as a coordination point for (6R)-5,10-methylene-5,6,7,8-tetrahydrofolate. A288 is a binding site for (6R)-5,10-methylene-5,6,7,8-tetrahydrofolate.

It belongs to the thymidylate synthase family. Bacterial-type ThyA subfamily. Homodimer.

Its subcellular location is the cytoplasm. It catalyses the reaction dUMP + (6R)-5,10-methylene-5,6,7,8-tetrahydrofolate = 7,8-dihydrofolate + dTMP. It functions in the pathway pyrimidine metabolism; dTTP biosynthesis. Catalyzes the reductive methylation of 2'-deoxyuridine-5'-monophosphate (dUMP) to 2'-deoxythymidine-5'-monophosphate (dTMP) while utilizing 5,10-methylenetetrahydrofolate (mTHF) as the methyl donor and reductant in the reaction, yielding dihydrofolate (DHF) as a by-product. This enzymatic reaction provides an intracellular de novo source of dTMP, an essential precursor for DNA biosynthesis. In Mycoplasmopsis synoviae (strain 53) (Mycoplasma synoviae), this protein is Thymidylate synthase.